A 286-amino-acid polypeptide reads, in one-letter code: Master replication protein (286 aa).

One can recognise a CRESS-DNA virus Rep endonuclease domain in the interval Ala2–Phe96. The short motif at Met9–Ile12 is the RCR-1 element. Residues Glu33 and His41 each coordinate a divalent metal cation. The RCR-2 signature appears at His41–Gln43. Positions Arg50 to Lys70 match the Nuclear localization signal motif. Tyr79 acts as the For DNA cleavage activity in catalysis. The short motif at Tyr79 to Lys82 is the RCR-3 element. An a divalent metal cation-binding site is contributed by Asp84. A Nuclear localization signal motif is present at residues Phe96 to Asp102. Gly180–Thr188 is a binding site for ATP.

The protein belongs to the nanoviridea/circoviridae replication-associated protein family. Homooligomer (Potential). Rep binds to repeated DNA motifs (iterons). Requires Mg(2+) as cofactor. Mn(2+) is required as a cofactor.

Its subcellular location is the host nucleus. The enzyme catalyses ATP + H2O = ADP + phosphate + H(+). In terms of biological role, essential for the replication of all genomic viral ssDNA (trans-replication). The closed circular ssDNA genome is first converted to a superhelical dsDNA. Rep binds a specific hairpin at the genome origin of replication. Introduces an endonucleolytic nick within the conserved sequence 5'-A[GT]TATTAC-3' in the intergenic region of the genome, thereby initiating the rolling circle replication (RCR). Following cleavage, binds covalently to the 5'-phosphate of DNA as a tyrosyl ester. The cleavage gives rise to a free 3'-OH that serves as a primer for the cellular DNA polymerase. The polymerase synthesizes the (+) strand DNA by rolling circle mechanism. After one round of replication, a Rep-catalyzed nucleotidyl transfer reaction releases a circular single-stranded virus genome, thereby terminating the replication. Displays origin-specific DNA cleavage, nucleotidyl transferase, ATPase and helicase activities. This Musa (BBTV) protein is Master replication protein (DNA-R).